Consider the following 362-residue polypeptide: MHINTPVLLAIIYFLVFAPKSADAWWLLSKTDTSSANSGSSPILCKNVPGLTPQQKRMCHENPNIIKYLISGLRSALHTCEYTFQREAWNCTLTLPGVGTSPLQIASRESAYVYAISAAGVSHSLARACSKGLIDDCGCGETPQGSGSVAVSQASSRSSSDFVWAGCSDNVKFGNTFGRKFVDQYDRQHATEPRSQMNLHNNRVGRRLLVNAMNKECKCHGVSGSCVTKTCWKVMPKFDEFASRLHQKYQLAKLVTNNDQKLTVRSSPSAGSSGRSERFARNMDASSKQMRNELIYLDASPNYCAIDVKDRECGENCPNICCGRGWRTTREIVDEPCHCQFVWCCEVKCKTCKKLVERNYCL.

An N-terminal signal peptide occupies residues Met1–Ala24. 5 disulfides stabilise this stretch: Cys80/Cys91, Cys129/Cys137, Cys139/Cys167, Cys217/Cys231, and Cys219/Cys226. Asn90 carries an N-linked (GlcNAc...) asparagine glycan. Ser223 carries O-palmitoleoyl serine; by mom-1 lipidation. The disordered stretch occupies residues Thr263–Asn282. Residues Arg265–Gly274 show a composition bias toward low complexity. Cystine bridges form between Cys304–Cys322, Cys313–Cys317, Cys321–Cys361, Cys337–Cys352, Cys339–Cys349, and Cys344–Cys345.

Belongs to the Wnt family. Post-translationally, palmitoleoylation is required for efficient binding to frizzled receptors. Depalmitoleoylation leads to Wnt signaling pathway inhibition. Expressed by anchor cell and vulva precursor cell descendants P5.ppa, P5.ppp, P7.paa and P7.pap. Expressed in the tail and weakly expressed in the vulva and body wall muscles.

It is found in the secreted. The protein resides in the extracellular space. It localises to the extracellular matrix. In terms of biological role, ligand for members of the frizzled family of seven transmembrane receptors. Required in embryonic development for endoderm specification and the correct positioning and orientation of the mitotic spindles and division planes in blastomere cells. Involved in cleavage axis determination. Binds to receptor tyrosine kinase cam-1. Together with wnt ligand lin-44, plays a role in controlling vulva precursor cell P7.p lineage orientation during vulva development, probably by acting as a ligand for tyrosine kinase receptor lin-18. May act redundantly with other Wnt ligands such as cwn-1 and cwn-2 to control seam cell polarity. The sequence is that of Protein mom-2 (mom-2) from Caenorhabditis elegans.